Consider the following 400-residue polypeptide: Exodeoxyribonuclease 7 large subunit (400 aa).

This sequence belongs to the XseA family. In terms of assembly, heterooligomer composed of large and small subunits.

Its subcellular location is the cytoplasm. The catalysed reaction is Exonucleolytic cleavage in either 5'- to 3'- or 3'- to 5'-direction to yield nucleoside 5'-phosphates.. Functionally, bidirectionally degrades single-stranded DNA into large acid-insoluble oligonucleotides, which are then degraded further into small acid-soluble oligonucleotides. This chain is Exodeoxyribonuclease 7 large subunit, found in Clostridium novyi (strain NT).